We begin with the raw amino-acid sequence, 170 residues long: Small ribosomal subunit protein uS5 (170 aa).

Residues 16 to 79 (IEDQLVAINR…EAGKKNMISV (64 aa)) enclose the S5 DRBM domain.

This sequence belongs to the universal ribosomal protein uS5 family. In terms of assembly, part of the 30S ribosomal subunit. Contacts proteins S4 and S8.

With S4 and S12 plays an important role in translational accuracy. In terms of biological role, located at the back of the 30S subunit body where it stabilizes the conformation of the head with respect to the body. In Lactobacillus delbrueckii subsp. bulgaricus (strain ATCC 11842 / DSM 20081 / BCRC 10696 / JCM 1002 / NBRC 13953 / NCIMB 11778 / NCTC 12712 / WDCM 00102 / Lb 14), this protein is Small ribosomal subunit protein uS5.